The chain runs to 796 residues: Toll-like receptor 6 (796 aa).

Residues 1 to 31 form the signal peptide; that stretch reads MTKDKEPIVKSFHFVCLMIIIVGTRIQFSDG. At 32–586 the chain is on the extracellular side; the sequence is NEFAVDKSKR…MSELSCNITL (555 aa). 19 LRR repeats span residues 54–77, 78–101, 102–122, 123–147, 148–168, 169–196, 197–219, 220–250, 251–277, 278–303, 304–330, 331–354, 355–378, 379–404, 405–429, 430–450, 451–474, 475–496, and 497–520; these read TKVL…FLSE, LTVL…FNQD, LEYL…PIVS, FRHL…NLSQ, LNFL…PIAH, LHLS…ILNA, KTLH…SVNT, LGCL…RGST, LLNF…WPKP, VEYL…SKTT, LKAL…VFSE, MNIM…APST, FKFL…TLVK, LETL…DMPS, LEIL…WVES, IVVL…CLPP, RIKV…KLEA, LQEL…SFSS, and LSVL…SCQK. Cysteines 117 and 139 form a disulfide. Asn-144 carries an N-linked (GlcNAc...) asparagine glycan. 2 N-linked (GlcNAc...) asparagine glycosylation sites follow: Asn-186 and Asn-214. Cys-235 and Cys-265 are joined by a disulfide. N-linked (GlcNAc...) asparagine glycans are attached at residues Asn-253 and Asn-285. A disulfide bridge connects residues Cys-348 and Cys-373. An N-linked (GlcNAc...) asparagine glycan is attached at Asn-359. N-linked (GlcNAc...) asparagine glycans are attached at residues Asn-423 and Asn-434. Residues Cys-424 and Cys-447 are joined by a disulfide bond. Residues 521 to 575 enclose the LRRCT domain; sequence MRSIKAGDNPFQCTCELREFVKNIDQVSSEVLEGWPDSYKCDYPESYRGSPLKDF. N-linked (GlcNAc...) asparagine glycosylation is present at Asn-583. The helical transmembrane segment at 587–607 threads the bilayer; the sequence is LIVTIGATMLVLAVTVTSLCI. The Cytoplasmic portion of the chain corresponds to 608 to 796; that stretch reads YLDLPWYLRM…LVTENNDVKS (189 aa). The TIR domain maps to 640-781; sequence LQFHAFISYS…LFWANIRAAF (142 aa).

This sequence belongs to the Toll-like receptor family. As to quaternary structure, homodimer (via cytoplasmic TIR domain). Heterodimer with TLR2 via their respective extracellular domains. Binds MYD88 via their respective TIR domains. Interacts with CD36, following CD36 stimulation by oxLDL or amyloid-beta 42, and forms a heterodimer with TLR4. The trimeric complex is internalized and triggers inflammatory response. LYN kinase activity facilitates TLR4:TLR6 heterodimerization and signal initiation. The heterodimer TLR2:TLR6 interacts with CD14 and CD36 in response to triacylated lipopeptides. As to expression, detected in monocytes, CD11c+ immature dendritic cells, plasmacytoid pre-dendritic cells and dermal microvessel endothelial cells.

Its subcellular location is the cell membrane. The protein resides in the cytoplasmic vesicle. The protein localises to the phagosome membrane. It localises to the membrane raft. It is found in the golgi apparatus. Participates in the innate immune response to Gram-positive bacteria and fungi. Specifically recognizes diacylated and, to a lesser extent, triacylated lipopeptides. In response to diacylated lipopeptides, forms the activation cluster TLR2:TLR6:CD14:CD36, this cluster triggers signaling from the cell surface and subsequently is targeted to the Golgi in a lipid-raft dependent pathway. Acts via MYD88 and TRAF6, leading to NF-kappa-B activation, cytokine secretion and the inflammatory response. Recognizes mycoplasmal macrophage-activating lipopeptide-2kD (MALP-2), soluble tuberculosis factor (STF), phenol-soluble modulin (PSM) and B.burgdorferi outer surface protein A lipoprotein (OspA-L) cooperatively with TLR2. In complex with TLR4, promotes sterile inflammation in monocytes/macrophages in response to oxidized low-density lipoprotein (oxLDL) or amyloid-beta 42. In this context, the initial signal is provided by oxLDL- or amyloid-beta 42-binding to CD36. This event induces the formation of a heterodimer of TLR4 and TLR6, which is rapidly internalized and triggers inflammatory response, leading to the NF-kappa-B-dependent production of CXCL1, CXCL2 and CCL9 cytokines, via MYD88 signaling pathway, and CCL5 cytokine, via TICAM1 signaling pathway, as well as IL1B secretion. The polypeptide is Toll-like receptor 6 (TLR6) (Homo sapiens (Human)).